The chain runs to 110 residues: V-type proton ATPase subunit G1 (110 aa).

At methionine 1 the chain carries N-acetylmethionine. Residues 60–80 (KLEETSGDSGANVKRLEQETD) form a disordered region.

It belongs to the V-ATPase G subunit family. V-ATPase is a heteromultimeric enzyme composed of a peripheral catalytic V1 complex (components A to H) attached to an integral membrane V0 proton pore complex (components: a, c, c'', d and e).

The protein localises to the cell membrane. It is found in the vacuole membrane. In terms of biological role, catalytic subunit of the peripheral V1 complex of vacuolar ATPase (V-ATPase). V-ATPase is responsible for acidifying a variety of intracellular compartments in eukaryotic cells. The protein is V-type proton ATPase subunit G1 (VHA-G1) of Arabidopsis thaliana (Mouse-ear cress).